The following is a 1216-amino-acid chain: Sodium/potassium/calcium exchanger 1 (1216 aa).

Residues 1–446 are Extracellular-facing; the sequence is MGKLIRMGAQ…DLFSVEERRQ (446 aa). Positions 94 to 196 are disordered; sequence EATAGRDGTP…KYSPSPLGRM (103 aa). Polar residues-rich tracts occupy residues 110 to 135 and 144 to 166; these read NTPS…TPTG and SATP…SYTR. Residues Asn-290 and Asn-303 are each glycosylated (N-linked (GlcNAc...) asparagine). Residues 447–467 form a helical membrane-spanning segment; sequence GWVVLHIFGMMYVFVALAIVC. The Cytoplasmic segment spans residues 468 to 491; that stretch reads DEYFVPALGVITDKLQISEDVAGA. The stretch at 488–528 is one Alpha-1 repeat; sequence VAGATFMAAGGSAPELFTSLIGVFISHSNVGIGTIVGSAVF. A helical membrane pass occupies residues 492-512; that stretch reads TFMAAGGSAPELFTSLIGVFI. Topologically, residues 513–518 are extracellular; the sequence is SHSNVG. A helical membrane pass occupies residues 519-539; it reads IGTIVGSAVFNILFVIGTCAL. The Cytoplasmic portion of the chain corresponds to 540 to 557; it reads FSREILNLTWWPLFRDIT. Residues 558–578 traverse the membrane as a helical segment; the sequence is FYIFDLMMLILFFLDSLIAWW. Residue Glu-579 is a topological domain, extracellular. The chain crosses the membrane as a helical span at residues 580-600; sequence SVLLLLAYAFYVFTMKWNQQL. The Cytoplasmic segment spans residues 601 to 1024; that stretch reads ELWVKEQLNK…SLEWPETRRK (424 aa). Ser-652 carries the post-translational modification Phosphoserine. A disordered region spans residues 677 to 1018; the sequence is GEARPSKDKE…ENEQPLSLEW (342 aa). The span at 702–712 shows a compositional bias: basic and acidic residues; that stretch reads AESKPEEEPAK. The residue at position 717 (Thr-717) is a Phosphothreonine. One copy of the 1; approximate repeat lies at 796–811; the sequence is DEDEGEIQAEGGEVKG. Positions 796–928 are 8 X 17 AA tandem repeats of D-E-D-E-G-E-I-Q-A-G-E-[GA]-G-E-V-[EK]-G; the sequence is DEDEGEIQAE…QAGEAGEVEG (133 aa). Repeat copies occupy residues 812–828, 829–845, 846–862, 863–879, 880–896, and 897–913. Composition is skewed to acidic residues over residues 824 to 834, 841 to 851, 858 to 868, 875 to 885, 892 to 902, 924 to 941, and 981 to 1011; these read GEVEGDEDEGE, GEVE…DEGE, and GDSE…EENE. An 8; approximate repeat occupies 914 to 928; sequence DEGEIQAGEAGEVEG. Residues 1025 to 1045 traverse the membrane as a helical segment; sequence QAIYLFLLPIVFPLWLTVPDV. Topologically, residues 1046 to 1052 are extracellular; sequence RRLEAKK. A helical membrane pass occupies residues 1053–1073; sequence FFVITFLGSILWIAMFSYLMV. The Cytoplasmic segment spans residues 1074 to 1088; the sequence is WWAHQVGETIGISEE. Residues 1089 to 1109 form a helical membrane-spanning segment; that stretch reads IMGLTILAAGTSIPDLITSVI. The Alpha-2 repeat unit spans residues 1096–1127; sequence AAGTSIPDLITSVIVARKGLGDMAVSSSVGSN. Residues 1110–1127 lie on the Extracellular side of the membrane; the sequence is VARKGLGDMAVSSSVGSN. The chain crosses the membrane as a helical span at residues 1128-1148; it reads IFDITVGLPLPWMLFSLINGL. Topologically, residues 1149–1157 are cytoplasmic; sequence QPVAVSSNG. The helical transmembrane segment at 1158–1178 threads the bilayer; that stretch reads LFCAIVLLFLMLLFVISSIAL. The Extracellular segment spans residues 1179-1185; the sequence is CKWRMNK. A helical transmembrane segment spans residues 1186–1206; the sequence is ILGFTMFLLYFVFLIISVMLE. Residues 1207 to 1216 are Cytoplasmic-facing; the sequence is DRIISCPVSV.

The protein belongs to the Ca(2+):cation antiporter (CaCA) (TC 2.A.19) family. SLC24A subfamily. The uncleaved signal sequence is required for efficient membrane targeting and proper membrane integration and topology. Post-translationally, glycosylated. As to expression, retina.

The protein localises to the cell membrane. It catalyses the reaction Ca(2+)(out) + K(+)(out) + 4 Na(+)(in) = Ca(2+)(in) + K(+)(in) + 4 Na(+)(out). Its function is as follows. Calcium, potassium:sodium antiporter that transports 1 Ca(2+) and 1 K(+) in exchange for 4 Na(+). Critical component of the visual transduction cascade, controlling the calcium concentration of outer segments during light and darkness. Light causes a rapid lowering of cytosolic free calcium in the outer segment of both retinal rod and cone photoreceptors and the light-induced lowering of calcium is caused by extrusion via this protein which plays a key role in the process of light adaptation. This Bos taurus (Bovine) protein is Sodium/potassium/calcium exchanger 1 (SLC24A1).